The following is a 427-amino-acid chain: Enolase (427 aa).

Residue glutamine 163 participates in (2R)-2-phosphoglycerate binding. The active-site Proton donor is glutamate 205. 3 residues coordinate Mg(2+): aspartate 242, glutamate 285, and aspartate 312. The (2R)-2-phosphoglycerate site is built by lysine 337, arginine 366, serine 367, and lysine 388. Lysine 337 serves as the catalytic Proton acceptor.

Belongs to the enolase family. Mg(2+) is required as a cofactor.

It is found in the cytoplasm. The protein resides in the secreted. It localises to the cell surface. The catalysed reaction is (2R)-2-phosphoglycerate = phosphoenolpyruvate + H2O. It functions in the pathway carbohydrate degradation; glycolysis; pyruvate from D-glyceraldehyde 3-phosphate: step 4/5. Its function is as follows. Catalyzes the reversible conversion of 2-phosphoglycerate (2-PG) into phosphoenolpyruvate (PEP). It is essential for the degradation of carbohydrates via glycolysis. This chain is Enolase, found in Burkholderia ambifaria (strain MC40-6).